The sequence spans 202 residues: UPF0056 membrane protein CPn_1010/CP_0843/CPj1010/CpB1048 (202 aa).

The next 6 membrane-spanning stretches (helical) occupy residues 7–27 (LSLLFYVLFDSPGSIPVFVAL), 39–59 (VILRECLFALGALILFVTFGR), 61–81 (FFQFLDISLYAFQIIGGFLLF), 105–125 (PIFFPLAFPVITGPAVITALL), 137–157 (IIFTAMIIAWAFSLFTLLCSS), and 175–195 (FGIALLLMSVNLMLKGISIAF).

Belongs to the UPF0056 (MarC) family.

It is found in the cell membrane. The polypeptide is UPF0056 membrane protein CPn_1010/CP_0843/CPj1010/CpB1048 (Chlamydia pneumoniae (Chlamydophila pneumoniae)).